A 333-amino-acid chain; its full sequence is Eukaryotic translation initiation factor 3 subunit H-B (333 aa).

One can recognise an MPN domain in the interval 20 to 154; that stretch reads IQIEGLVVMK…LKAYRLTPKL (135 aa). Positions 249–295 are disordered; sequence SKQQQQKHQYVQRRQQENAQRQSRGEPPLPEEDLTKMFKPPQPPPRM. The span at 250-261 shows a compositional bias: low complexity; that stretch reads KQQQQKHQYVQR.

It belongs to the eIF-3 subunit H family. In terms of assembly, component of the eukaryotic translation initiation factor 3 (eIF-3) complex, which is composed of 13 subunits: eif3a, eif3b, eif3c, eif3d, eif3e, eif3f, eif3g, eif3h, eif3i, eif3j, eif3k, eif3l and eif3m.

The protein resides in the cytoplasm. Functionally, component of the eukaryotic translation initiation factor 3 (eIF-3) complex, which is involved in protein synthesis of a specialized repertoire of mRNAs and, together with other initiation factors, stimulates binding of mRNA and methionyl-tRNAi to the 40S ribosome. The eIF-3 complex specifically targets and initiates translation of a subset of mRNAs involved in cell proliferation. The protein is Eukaryotic translation initiation factor 3 subunit H-B (eif3hb) of Danio rerio (Zebrafish).